The sequence spans 331 residues: Peroxidase 49 (331 aa).

The first 22 residues, M1 to C22, serve as a signal peptide directing secretion. Disulfide bonds link C39-C119, C72-C77, C125-C326, and C204-C236. Residue H70 is the Proton acceptor of the active site. D71, V74, G76, D78, and S80 together coordinate Ca(2+). P167 is a binding site for substrate. An N-linked (GlcNAc...) asparagine glycan is attached at N170. Heme b is bound at residue H197. Residue T198 coordinates Ca(2+). An N-linked (GlcNAc...) asparagine glycan is attached at N213. Ca(2+) contacts are provided by D249, S252, and D257.

This sequence belongs to the peroxidase family. Classical plant (class III) peroxidase subfamily. The cofactor is heme b. Ca(2+) serves as cofactor.

It is found in the secreted. The catalysed reaction is 2 a phenolic donor + H2O2 = 2 a phenolic radical donor + 2 H2O. In terms of biological role, removal of H(2)O(2), oxidation of toxic reductants, biosynthesis and degradation of lignin, suberization, auxin catabolism, response to environmental stresses such as wounding, pathogen attack and oxidative stress. These functions might be dependent on each isozyme/isoform in each plant tissue. This is Peroxidase 49 (PER49) from Arabidopsis thaliana (Mouse-ear cress).